Consider the following 527-residue polypeptide: Inositolphosphotransferase 1 (527 aa).

The Cytoplasmic portion of the chain corresponds to 1–24; the sequence is MNVIFSLASFVKNMYNASLNQRNL. The chain crosses the membrane as a helical span at residues 25–45; that stretch reads ISLPFNFMLNFAPVFIWLSIF. The Lumenal portion of the chain corresponds to 46-99; it reads KRAGLIPIRLRPDIHSKFAFFADQFLFGDYWHELTVQLPDNTSKLFFWSFISSS. Residues 100–120 traverse the membrane as a helical segment; that stretch reads AFLLVFLICIPFAIWYYIYYI. Residues 121–152 are Cytoplasmic-facing; that stretch reads KHVNYNLLEWFANIFHYPCKRKQRPIQKRFRT. The chain crosses the membrane as a helical span at residues 153–173; sequence IFIPFALPLFTFVILNIDHFF. At 174–190 the chain is on the lumenal side; that stretch reads AYQSDANFTKTKDLLAW. Residues 191–211 traverse the membrane as a helical segment; the sequence is FSYVILHLTAPILTAVYLYVF. Over 212-219 the chain is Cytoplasmic; the sequence is QPPGTLKC. The helical transmembrane segment at 220 to 240 threads the bilayer; that stretch reads FSFALGLQNIAGVLTHLLVPM. Topologically, residues 241–288 are lumenal; sequence ASPWFTHLYGIDDTEHVNYTQEGFAAGLIRVDSHLGTHLNTKGFHMSP. The chain crosses the membrane as a helical span at residues 289-309; that stretch reads IVFGAVPSLHSAIAFQCFLFL. Over 310-435 the chain is Cytoplasmic; the sequence is VSRSTSLKHR…KWIFKIVNDG (126 aa). The segment at 331–404 is disordered; the sequence is NDSSTFKLSE…GGGDGSIINS (74 aa). A compositionally biased stretch (low complexity) spans 376 to 389; sequence ERSSSPSSSFTVSS. Residues 436–456 form a helical membrane-spanning segment; the sequence is FIPKFWAILYIILQWWATMYL. The Lumenal portion of the chain corresponds to 457–461; that stretch reads DHHYR. Residues 462–482 form a helical membrane-spanning segment; sequence FDLFVGVLYAMTSFIIINWFV. Residues 483–527 are Cytoplasmic-facing; sequence LQPKVLKKWIHIRLGDKVDTRNEARTFGMRVFCGTKMEWFFDPLA.

It is found in the golgi apparatus membrane. The enzyme catalyses an alpha-D-mannosyl-(1&lt;-&gt;6)-1D-myo-inositol-1-phospho-N-[(R)-2-hydroxy-very-long-chain fatty acyl]-(R)-4-hydroxysphingoid base + a 1,2-diacyl-sn-glycero-3-phospho-(1D-myo-inositol) = an alpha-D-mannosyl-6-(1D-myo-inositol phospho)-(1&lt;-&gt;6)-1D-myo-inositol-1-phospho-N-[(R)-2-hydroxy-very-long-chain fatty acyl]-(R)-4-hydroxysphingoid base + a 1,2-diacyl-sn-glycerol. It catalyses the reaction a mannosylinositol-1-phospho-N-acyl-sphingoid base + a 1,2-diacyl-sn-glycero-3-phospho-(1D-myo-inositol) = an inositol phosphomannosylnositol-1-phospho-N-acylsphingoid base + a 1,2-diacyl-sn-glycerol. The catalysed reaction is a mannosylinositol-1-phospho-N-(2-hydroxyacyl)-4R-hydroxysphingoid base + a 1,2-diacyl-sn-glycero-3-phospho-(1D-myo-inositol) = an inositol phosphomannosylnositol-1-phospho-N-(2-hydroxyacyl)-4R-hydroxysphingoid base + a 1,2-diacyl-sn-glycerol. In terms of biological role, catalyzes the addition of a phosphorylinositol group onto mannosyl phosphorylinositol ceramide (MIPC) to form mannosyl diphosphorylinositol ceramide (M(IP)2C), the major sphingolipid in membranes of S.cerevisiae. The polypeptide is Inositolphosphotransferase 1 (Saccharomyces cerevisiae (strain ATCC 204508 / S288c) (Baker's yeast)).